Here is a 1027-residue protein sequence, read N- to C-terminus: Kinesin heavy chain isoform 5A (1027 aa).

Position 2 is an N-acetylalanine (A2). Positions 9 to 327 (SIKVLCRFRP…LMFGQRAKTI (319 aa)) constitute a Kinesin motor domain. 86-93 (GQTSSGKT) contributes to the ATP binding site. The microtubule-binding stretch occupies residues 174–315 (VSSPEEILDV…PSSYNDAETK (142 aa)). The tract at residues 271–361 (EGTKSYVPYR…KTKAQKETIA (91 aa)) is necessary for interaction with ZFYVE27. Residues 331 to 905 (ASVNLELTAE…EVDRIKEAVR (575 aa)) are a coiled coil. Residues 353-1027 (TKAQKETIAK…FPLHQETAAS (675 aa)) form an interaction with BICD2 region. Position 397 is a phosphothreonine (T397). Positions 906–936 (YKSSGKRGHSAQIAKPVRPGHYPASSPTNPY) are disordered. The globular stretch occupies residues 907-1027 (KSSGKRGHSA…FPLHQETAAS (121 aa)).

Belongs to the TRAFAC class myosin-kinesin ATPase superfamily. Kinesin family. Kinesin subfamily. Oligomer composed of two heavy chains and two light chains. Interacts with GRIP1. Interacts with FMR1 (via C-terminus); this interaction is increased in a mGluR-dependent manner. Interacts with BORCS5. Interacts with ZFYVE27. Interacts with VAPA, VAPB, SURF4, RAB11A (GDP-bound form), RAB11B (GDP-bound form) and RTN3 in a ZFYVE27-dependent manner. Interacts with BICD2. Interacts with DTNB. As to expression, expressed in brain.

Its subcellular location is the cytoplasm. It is found in the perinuclear region. The protein resides in the cytoskeleton. The protein localises to the perikaryon. It catalyses the reaction ATP + H2O + a kinesin associated with a microtubule at position (n) = ADP + phosphate a kinesin associated with a microtubule at position (n+1, toward the plus end).. Functionally, microtubule-dependent motor required for slow axonal transport of neurofilament proteins (NFH, NFM and NFL). Can induce formation of neurite-like membrane protrusions in non-neuronal cells in a ZFYVE27-dependent manner. The ZFYVE27-KIF5A complex contributes to the vesicular transport of VAPA, VAPB, SURF4, RAB11A, RAB11B and RTN3 proteins in neurons. Required for anterograde axonal transportation of MAPK8IP3/JIP3 which is essential for MAPK8IP3/JIP3 function in axon elongation. The polypeptide is Kinesin heavy chain isoform 5A (Rattus norvegicus (Rat)).